A 311-amino-acid chain; its full sequence is NAD kinase (311 aa).

Residue Asp-88 is the Proton acceptor of the active site. NAD(+) contacts are provided by residues 88–89 (DG), 162–163 (NE), Arg-190, Asp-192, Val-200, and 203–208 (TAHNLS).

This sequence belongs to the NAD kinase family. The cofactor is a divalent metal cation.

The protein localises to the cytoplasm. The catalysed reaction is NAD(+) + ATP = ADP + NADP(+) + H(+). In terms of biological role, involved in the regulation of the intracellular balance of NAD and NADP, and is a key enzyme in the biosynthesis of NADP. Catalyzes specifically the phosphorylation on 2'-hydroxyl of the adenosine moiety of NAD to yield NADP. The protein is NAD kinase of Rhodopirellula baltica (strain DSM 10527 / NCIMB 13988 / SH1).